Here is a 262-residue protein sequence, read N- to C-terminus: GTP cyclohydrolase 1 type 2 homolog (262 aa).

A divalent metal cation is bound by residues H65, D102, H222, and E225.

This sequence belongs to the GTP cyclohydrolase I type 2/NIF3 family. In terms of assembly, homohexamer.

The sequence is that of GTP cyclohydrolase 1 type 2 homolog from Streptococcus pyogenes serotype M6 (strain ATCC BAA-946 / MGAS10394).